The following is a 380-amino-acid chain: 1-deoxy-D-xylulose 5-phosphate reductoisomerase (380 aa).

Positions 10, 11, 12, 13, 36, 37, 38, and 120 each coordinate NADPH. K121 provides a ligand contact to 1-deoxy-D-xylulose 5-phosphate. E122 serves as a coordination point for NADPH. Position 146 (D146) interacts with Mn(2+). 4 residues coordinate 1-deoxy-D-xylulose 5-phosphate: S147, E148, S172, and H195. E148 provides a ligand contact to Mn(2+). G201 contributes to the NADPH binding site. Positions 208, 213, 214, and 217 each coordinate 1-deoxy-D-xylulose 5-phosphate. Residue E217 participates in Mn(2+) binding.

The protein belongs to the DXR family. The cofactor is Mg(2+). Mn(2+) serves as cofactor.

The enzyme catalyses 2-C-methyl-D-erythritol 4-phosphate + NADP(+) = 1-deoxy-D-xylulose 5-phosphate + NADPH + H(+). It functions in the pathway isoprenoid biosynthesis; isopentenyl diphosphate biosynthesis via DXP pathway; isopentenyl diphosphate from 1-deoxy-D-xylulose 5-phosphate: step 1/6. Functionally, catalyzes the NADPH-dependent rearrangement and reduction of 1-deoxy-D-xylulose-5-phosphate (DXP) to 2-C-methyl-D-erythritol 4-phosphate (MEP). The protein is 1-deoxy-D-xylulose 5-phosphate reductoisomerase of Listeria innocua serovar 6a (strain ATCC BAA-680 / CLIP 11262).